Here is a 235-residue protein sequence, read N- to C-terminus: Orotidine 5'-phosphate decarboxylase (235 aa).

Substrate contacts are provided by residues Asp-17, Lys-39, 66–75, Thr-121, Arg-182, Gln-191, Gly-211, and Arg-212; that span reads DLKLHDIGNT. Lys-68 acts as the Proton donor in catalysis.

This sequence belongs to the OMP decarboxylase family. Type 1 subfamily. As to quaternary structure, homodimer.

The enzyme catalyses orotidine 5'-phosphate + H(+) = UMP + CO2. It participates in pyrimidine metabolism; UMP biosynthesis via de novo pathway; UMP from orotate: step 2/2. Catalyzes the decarboxylation of orotidine 5'-monophosphate (OMP) to uridine 5'-monophosphate (UMP). The polypeptide is Orotidine 5'-phosphate decarboxylase (Afipia carboxidovorans (strain ATCC 49405 / DSM 1227 / KCTC 32145 / OM5) (Oligotropha carboxidovorans)).